We begin with the raw amino-acid sequence, 337 residues long: Calcium-binding protein 39-like (337 aa).

It belongs to the Mo25 family. As to quaternary structure, component of a trimeric complex composed of STK11/LKB1, STRAD (STRADA or STRADB) and CAB39/MO25 (CAB39/MO25alpha or CAB39L/MO25beta): the complex tethers STK11/LKB1 in the cytoplasm and stimulates its catalytic activity.

In terms of biological role, component of a complex that binds and activates STK11/LKB1. In the complex, required to stabilize the interaction between CAB39/MO25 (CAB39/MO25alpha or CAB39L/MO25beta) and STK11/LKB1. In Homo sapiens (Human), this protein is Calcium-binding protein 39-like (CAB39L).